The chain runs to 355 residues: UDP-N-acetylglucosamine--N-acetylmuramyl-(pentapeptide) pyrophosphoryl-undecaprenol N-acetylglucosamine transferase (355 aa).

UDP-N-acetyl-alpha-D-glucosamine-binding positions include 14–16 (TGG), N126, R162, S190, I243, 262–267 (ALTVSE), and Q287.

It belongs to the glycosyltransferase 28 family. MurG subfamily.

It localises to the cell inner membrane. It catalyses the reaction di-trans,octa-cis-undecaprenyl diphospho-N-acetyl-alpha-D-muramoyl-L-alanyl-D-glutamyl-meso-2,6-diaminopimeloyl-D-alanyl-D-alanine + UDP-N-acetyl-alpha-D-glucosamine = di-trans,octa-cis-undecaprenyl diphospho-[N-acetyl-alpha-D-glucosaminyl-(1-&gt;4)]-N-acetyl-alpha-D-muramoyl-L-alanyl-D-glutamyl-meso-2,6-diaminopimeloyl-D-alanyl-D-alanine + UDP + H(+). Its pathway is cell wall biogenesis; peptidoglycan biosynthesis. In terms of biological role, cell wall formation. Catalyzes the transfer of a GlcNAc subunit on undecaprenyl-pyrophosphoryl-MurNAc-pentapeptide (lipid intermediate I) to form undecaprenyl-pyrophosphoryl-MurNAc-(pentapeptide)GlcNAc (lipid intermediate II). This chain is UDP-N-acetylglucosamine--N-acetylmuramyl-(pentapeptide) pyrophosphoryl-undecaprenol N-acetylglucosamine transferase, found in Vibrio parahaemolyticus serotype O3:K6 (strain RIMD 2210633).